Consider the following 301-residue polypeptide: MTSRRSVKSGPREVPRDEYEDLYYTPSSGMASPDSPPDTSRRGALQTRSRQRGEVRFVQYDESDYALYGGSSSEDDEHPEVPRTRRPVSGAVLSGPGPARAPPPPAGSGGAGRTPTTAPRAPRTQRVATKAPAAPAAETTRGRKSAQPESAALPDAPASTAPTRSKTPAQGLARKLHFSTAPPNPDAPWTPRVAGFNKRVFCAAVGRLAAMHARMAAVQLWDMSRPRTDEDLNELLGITTIRVTVCEGKNLLQRANELVNPDVVQDVDAATATRGRSAASRPTERPRAPARSASRPRRPVE.

Positions 1–171 are disordered; that stretch reads MTSRRSVKSG…PTRSKTPAQG (171 aa). The segment covering 113–124 has biased composition (low complexity); it reads RTPTTAPRAPRT. A Nuclear localization signal motif is present at residues 163–166; it reads TRSK. The segment at 174-267 is interaction with gE; sequence RKLHFSTAPP…LVNPDVVQDV (94 aa). Positions 232 to 244 match the Nuclear export signal motif; sequence LNELLGITTIRVT. The segment covering 269–281 has biased composition (low complexity); that stretch reads AATATRGRSAASR. Residues 269 to 301 are disordered; that stretch reads AATATRGRSAASRPTERPRAPARSASRPRRPVE.

Belongs to the alphaherpesvirinae VP22 tegument protein family. In terms of assembly, interacts with gE (via C-terminus); this interaction is necessary for the recruitment of VP22 to the Golgi and its packaging into virions. Interacts with gM (via C-terminus). Interacts with VP16; this interaction allows the formation of a tripartite complex composed of VP16, VP22 and UL41/VHS. According to a report interacts with gD (via C-terminus). According another publication, does not interact with gD. Interacts with host CGAS. Interacts with host SET; this interaction may interfere with SET-mediated nucleosomal deposition onto the viral genome. Interacts with the capsid-binding protein UL16. Highly phosphorylated in the host cell. Packaging is selective for underphosphorylated forms.

Its subcellular location is the virion tegument. It localises to the host cytoplasm. The protein localises to the host nucleus. It is found in the host Golgi apparatus. In terms of biological role, tegument protein that plays different roles during the time course of infection. Participates in both the accumulation of viral mRNAs and viral protein translation at late time of infection. Modulates the RNase activity of the virion host shutoff protein UL41 probably to ensure necessary levels of key cellular mRNAs and proteins. Plays a role in microtubule reorganization that occurs after viral infection by stabilizing microtubule network. Finally, may prevent nucleosomal deposition onto the viral genome by interacting with and inhibiting host SET. Plays a role in the inhibition of host innate immune system by targeting the CGAS enzymatic activity which is the principal cytosolic DNA sensor that detects invading viral DNA. Acts by mediating disruption of liquid-like droplets in which CGAS is activated, thereby preventing CGAS activity. The chain is Tegument protein VP22 from Human herpesvirus 1 (strain 17) (HHV-1).